Consider the following 922-residue polypeptide: Neuropilin-1 (922 aa).

A signal peptide spans 1-21; the sequence is MERGLPLLCATLALALALAGA. At 22–855 the chain is on the extracellular side; it reads FRSDKCGGTI…PGNVLKTLDP (834 aa). Disulfide bonds link C27–C54, C82–C104, and C147–C173. 2 CUB domains span residues 27–141 and 147–265; these read CGGT…YEIF and CSQN…YSVL. N150 carries N-linked (GlcNAc...) asparagine glycosylation. Ca(2+) contacts are provided by E195, D209, and D250. C206 and C228 are oxidised to a cystine. N-linked (GlcNAc...) asparagine glycans are attached at residues N261, N300, and N522. 2 disulfide bridges follow: C275–C424 and C431–C583. F5/8 type C domains lie at 275–424 and 431–583; these read CMEA…VYGC and CSGM…LLGC. O-linked (Xyl...) (chondroitin sulfate) serine; alternate glycosylation is present at S612. The O-linked (Xyl...) (heparan sulfate) serine; alternate glycan is linked to S612. The 167-residue stretch at 645–811 folds into the MAM domain; that stretch reads TYGFNCEFGW…NHIPQEDCAK (167 aa). S829 carries O-linked (Xyl...) (chondroitin sulfate) serine glycosylation. Residue N841 is glycosylated (N-linked (GlcNAc...) asparagine). The chain crosses the membrane as a helical span at residues 856–880; the sequence is ILITIIAMSALGVLLGAVCGVVLYC. At 881–922 the chain is on the cytoplasmic side; that stretch reads ACWHNGMSERNLSALENYNFELVDGVKLKKDKLNPQSNYSEA. S893 carries the phosphoserine modification.

This sequence belongs to the neuropilin family. In terms of assembly, homodimer, and heterodimer with NRP2. Binds PLXNB1. Interacts with FER. Interacts with VEGFA. Interacts with ABCB8/MITOSUR in mitochondria. In terms of tissue distribution, found in the embryonic nervous system. Expressed in dorsal root ganglia.

The protein resides in the mitochondrion membrane. It localises to the cell membrane. Its subcellular location is the cytoplasm. In terms of biological role, cell-surface receptor involved in the development of the cardiovascular system, in angiogenesis, in the formation of certain neuronal circuits and in organogenesis outside the nervous system. Mediates the chemorepulsant activity of semaphorins. Recognizes a C-end rule (CendR) motif R/KXXR/K on its ligands which causes cellular internalization and vascular leakage. It binds to semaphorin 3A, the PLGF-2 isoform of PGF, the VEGF165 isoform of VEGFA and VEGFB. Coexpression with KDR results in increased VEGF165 binding to KDR as well as increased chemotaxis. Regulates VEGF-induced angiogenesis. Binding to VEGFA initiates a signaling pathway needed for motor neuron axon guidance and cell body migration, including for the caudal migration of facial motor neurons from rhombomere 4 to rhombomere 6 during embryonic development. Regulates mitochondrial iron transport via interaction with ABCB8/MITOSUR. The polypeptide is Neuropilin-1 (Nrp1) (Rattus norvegicus (Rat)).